The sequence spans 70 residues: Large ribosomal subunit protein bL31 (70 aa).

N6-acetyllysine is present on lysine 8. Cysteine 16, cysteine 18, cysteine 37, and cysteine 40 together coordinate Zn(2+).

Belongs to the bacterial ribosomal protein bL31 family. Type A subfamily. As to quaternary structure, part of the 50S ribosomal subunit. Requires Zn(2+) as cofactor.

Functionally, binds the 23S rRNA. This chain is Large ribosomal subunit protein bL31, found in Shigella flexneri.